The chain runs to 261 residues: Glucosamine-6-phosphate deaminase (261 aa).

Asp-67 (proton acceptor; for enolization step) is an active-site residue. The active-site For ring-opening step is the Asp-136. His-138 functions as the Proton acceptor; for ring-opening step in the catalytic mechanism. The For ring-opening step role is filled by Glu-143.

This sequence belongs to the glucosamine/galactosamine-6-phosphate isomerase family. NagB subfamily.

The enzyme catalyses alpha-D-glucosamine 6-phosphate + H2O = beta-D-fructose 6-phosphate + NH4(+). It functions in the pathway amino-sugar metabolism; N-acetylneuraminate degradation; D-fructose 6-phosphate from N-acetylneuraminate: step 5/5. Catalyzes the reversible isomerization-deamination of glucosamine 6-phosphate (GlcN6P) to form fructose 6-phosphate (Fru6P) and ammonium ion. In Streptomyces avermitilis (strain ATCC 31267 / DSM 46492 / JCM 5070 / NBRC 14893 / NCIMB 12804 / NRRL 8165 / MA-4680), this protein is Glucosamine-6-phosphate deaminase.